The sequence spans 133 residues: Peptide methionine sulfoxide reductase MsrB (133 aa).

Over residues 1–12 (MSEKVQKSEHEW) the composition is skewed to basic and acidic residues. The segment at 1–36 (MSEKVQKSEHEWQQQLTPEQYRVTREKGTERPFTGD) is disordered. One can recognise a MsrB domain in the interval 9 to 132 (EHEWQQQLTP…NSVSLDFHPG (124 aa)). Zn(2+) is bound by residues Cys-48, Cys-51, Cys-97, and Cys-100. Cys-121 serves as the catalytic Nucleophile.

The protein belongs to the MsrB Met sulfoxide reductase family. It depends on Zn(2+) as a cofactor.

It catalyses the reaction L-methionyl-[protein] + [thioredoxin]-disulfide + H2O = L-methionyl-(R)-S-oxide-[protein] + [thioredoxin]-dithiol. This chain is Peptide methionine sulfoxide reductase MsrB, found in Chromohalobacter salexigens (strain ATCC BAA-138 / DSM 3043 / CIP 106854 / NCIMB 13768 / 1H11).